A 376-amino-acid polypeptide reads, in one-letter code: Zinc-regulated transporter 1 (376 aa).

The Extracellular portion of the chain corresponds to 1-50; that stretch reads MSNVTTPWWKQWDPSEVTLADKTPDDVWKTCVLQGVYFGGNEYNGNLGAR. Residues 51 to 71 form a helical membrane-spanning segment; the sequence is ISSVFVILFVSTFFTMFPLIS. Over 72–80 the chain is Cytoplasmic; it reads TKVKRLRIP. The chain crosses the membrane as a helical span at residues 81 to 101; sequence LYVYLFAKYFGSGVIVATAFI. The Extracellular portion of the chain corresponds to 102-122; that stretch reads HLMDPAYGAIGGTTCVGQTGN. A helical transmembrane segment spans residues 123–143; that stretch reads WGLYSWCPAIMLTSLTFTFLT. Topologically, residues 144-216 are cytoplasmic; that stretch reads DLFSSVWVER…TSMDVVQSFQ (73 aa). Residues 177 to 191 are compositionally biased toward polar residues; it reads VSSENDNENGTANGS. Residues 177 to 196 form a disordered region; sequence VSSENDNENGTANGSHDTKN. The helical transmembrane segment at 217-237 threads the bilayer; sequence AQFYAFLILEFGVIFHSVMIG. Over 238–242 the chain is Extracellular; it reads LNLGS. The helical transmembrane segment at 243–263 threads the bilayer; the sequence is VGDEFSSLYPVLVFHQSFEGL. The Cytoplasmic portion of the chain corresponds to 264–278; that stretch reads GIGARLSAIEFPRSK. The helical transmembrane segment at 279–299 threads the bilayer; sequence RWWPWALCVAYGLTTPICVAI. Over 300 to 310 the chain is Extracellular; that stretch reads GLGVRTRYVSG. A helical transmembrane segment spans residues 311–331; the sequence is SYTALVISGVLDAISAGILLY. Over 332 to 354 the chain is Cytoplasmic; sequence TGLVELLARDFIFNPQRTKDLRE. A helical transmembrane segment spans residues 355 to 375; that stretch reads LSFNVICTLFGAGIMALIGKW. Position 376 (Ala-376) is a topological domain, extracellular.

Belongs to the ZIP transporter (TC 2.A.5) family.

The protein localises to the membrane. In terms of biological role, high-affinity zinc transport protein. The chain is Zinc-regulated transporter 1 (ZRT1) from Saccharomyces cerevisiae (strain ATCC 204508 / S288c) (Baker's yeast).